Here is a 721-residue protein sequence, read N- to C-terminus: Ribonuclease R (721 aa).

Residues 249–587 (RRSIIDREII…VHRLLWMFIF (339 aa)) enclose the RNB domain. Positions 639–719 (GKEFIGVVTT…LTRKIDFELV (81 aa)) constitute an S1 motif domain.

The protein belongs to the RNR ribonuclease family. RNase R subfamily.

The protein resides in the cytoplasm. It catalyses the reaction Exonucleolytic cleavage in the 3'- to 5'-direction to yield nucleoside 5'-phosphates.. In terms of biological role, 3'-5' exoribonuclease that releases 5'-nucleoside monophosphates and is involved in maturation of structured RNAs. This chain is Ribonuclease R, found in Ureaplasma parvum serovar 3 (strain ATCC 700970).